The following is a 242-amino-acid chain: Small ribosomal subunit protein uS2 (242 aa).

This sequence belongs to the universal ribosomal protein uS2 family.

This is Small ribosomal subunit protein uS2 from Shewanella sediminis (strain HAW-EB3).